The following is a 390-amino-acid chain: Transforming growth factor beta-1 proprotein (390 aa).

The N-terminal stretch at 1-29 (MPPSGLRLLPLLLPLLWLLVLTPGRPAAG) is a signal peptide. Positions 30–74 (LSTCKTIDMELVKRKRIEAIRGQILSKLRLASPPSQGEVPPGPLP) are straightjacket domain. The tract at residues 75–271 (EAVLALYNST…ATPLERAQQL (197 aa)) is arm domain. Asparagine 82, asparagine 136, and asparagine 176 each carry an N-linked (GlcNAc...) asparagine glycan. A bowtie tail region spans residues 226-252 (DSKDNTLRVGINGFSSSRRGDLATIDG). Residues 244–246 (RGD) carry the Cell attachment site motif. Intrachain disulfides connect cysteine 285-cysteine 294, cysteine 293-cysteine 356, cysteine 322-cysteine 387, and cysteine 326-cysteine 389.

The protein belongs to the TGF-beta family. As to quaternary structure, homodimer; disulfide-linked. Interacts with the serine proteases, HTRA1 and HTRA3: the interaction with either inhibits TGFB1-mediated signaling and the HTRA protease activity is required for this inhibition. May interact with THSD4; this interaction may lead to sequestration by FBN1 microfibril assembly and attenuation of TGFB signaling. Interacts with CD109, DPT and ASPN. Interacts with EFEMP2. Interacts with TSKU; the interaction contributes to regulation of the hair cycle. Interacts with TGFBR3. In terms of assembly, homodimer; disulfide-linked. Interacts with transforming growth factor beta-1 (TGF-beta-1) chain; interaction is non-covalent and maintains TGF-beta-1 in a latent state; each latency-associated peptide (LAP) monomer interacts with TGF-beta-1 in the other monomer. Interacts with LTBP1; leading to regulation of TGF-beta-1 activation. Interacts with LRRC32/GARP; leading to regulation of TGF-beta-1 activation on the surface of activated regulatory T-cells (Tregs). Interacts with LRRC33/NRROS; leading to regulation of TGF-beta-1 activation in macrophages and microglia. Interacts (via cell attachment site) with integrins ITGAV and ITGB6 (ITGAV:ITGB6), leading to release of the active TGF-beta-1. Latency-associated peptide: Interacts with NREP; the interaction results in a decrease in TGFB1 autoinduction. Interacts with HSP90AB1; inhibits latent TGFB1 activation. Homodimer; disulfide-linked. Interacts with TGF-beta receptors (TGFBR1 and TGFBR2), leading to signal transduction. Post-translationally, transforming growth factor beta-1 proprotein: The precursor proprotein is cleaved in the Golgi apparatus by FURIN to form Transforming growth factor beta-1 (TGF-beta-1) and Latency-associated peptide (LAP) chains, which remain non-covalently linked, rendering TGF-beta-1 inactive. N-glycosylated. Deglycosylation leads to activation of Transforming growth factor beta-1 (TGF-beta-1); mechanisms triggering deglycosylation-driven activation of TGF-beta-1 are however unclear.

It localises to the secreted. The protein resides in the extracellular space. It is found in the extracellular matrix. Its function is as follows. Transforming growth factor beta-1 proprotein: Precursor of the Latency-associated peptide (LAP) and Transforming growth factor beta-1 (TGF-beta-1) chains, which constitute the regulatory and active subunit of TGF-beta-1, respectively. In terms of biological role, required to maintain the Transforming growth factor beta-1 (TGF-beta-1) chain in a latent state during storage in extracellular matrix. Associates non-covalently with TGF-beta-1 and regulates its activation via interaction with 'milieu molecules', such as LTBP1, LRRC32/GARP and LRRC33/NRROS, that control activation of TGF-beta-1. Interaction with LRRC33/NRROS regulates activation of TGF-beta-1 in macrophages and microglia. Interaction with LRRC32/GARP controls activation of TGF-beta-1 on the surface of activated regulatory T-cells (Tregs). Interaction with integrins (ITGAV:ITGB6 or ITGAV:ITGB8) results in distortion of the Latency-associated peptide chain and subsequent release of the active TGF-beta-1. Multifunctional protein that regulates the growth and differentiation of various cell types and is involved in various processes, such as normal development, immune function, microglia function and responses to neurodegeneration. Activation into mature form follows different steps: following cleavage of the proprotein in the Golgi apparatus, Latency-associated peptide (LAP) and Transforming growth factor beta-1 (TGF-beta-1) chains remain non-covalently linked rendering TGF-beta-1 inactive during storage in extracellular matrix. At the same time, LAP chain interacts with 'milieu molecules', such as LTBP1, LRRC32/GARP and LRRC33/NRROS that control activation of TGF-beta-1 and maintain it in a latent state during storage in extracellular milieus. TGF-beta-1 is released from LAP by integrins (ITGAV:ITGB6 or ITGAV:ITGB8): integrin-binding to LAP stabilizes an alternative conformation of the LAP bowtie tail and results in distortion of the LAP chain and subsequent release of the active TGF-beta-1. Once activated following release of LAP, TGF-beta-1 acts by binding to TGF-beta receptors (TGFBR1 and TGFBR2), which transduce signal. While expressed by many cells types, TGF-beta-1 only has a very localized range of action within cell environment thanks to fine regulation of its activation by Latency-associated peptide chain (LAP) and 'milieu molecules'. Plays an important role in bone remodeling: acts as a potent stimulator of osteoblastic bone formation, causing chemotaxis, proliferation and differentiation in committed osteoblasts. Can promote either T-helper 17 cells (Th17) or regulatory T-cells (Treg) lineage differentiation in a concentration-dependent manner. At high concentrations, leads to FOXP3-mediated suppression of RORC and down-regulation of IL-17 expression, favoring Treg cell development. At low concentrations in concert with IL-6 and IL-21, leads to expression of the IL-17 and IL-23 receptors, favoring differentiation to Th17 cells. Stimulates sustained production of collagen through the activation of CREB3L1 by regulated intramembrane proteolysis (RIP). Mediates SMAD2/3 activation by inducing its phosphorylation and subsequent translocation to the nucleus. Positively regulates odontoblastic differentiation in dental papilla cells, via promotion of IPO7-mediated translocation of phosphorylated SMAD2 to the nucleus and subsequent transcription of target genes. Can induce epithelial-to-mesenchymal transition (EMT) and cell migration in various cell types. This chain is Transforming growth factor beta-1 proprotein (TGFB1), found in Equus caballus (Horse).